A 360-amino-acid polypeptide reads, in one-letter code: Photosystem II protein D1 (360 aa).

3 helical membrane passes run 29–46, 118–133, and 142–156; these read YIGWFGVLMIPTLLTATT, HFLLGVASYMGREWEL, and WIFVAFSAPVAAASA. Chlorophyll a is bound at residue H118. Position 126 (Y126) interacts with pheophytin a. [CaMn4O5] cluster-binding residues include D170 and E189. A helical transmembrane segment spans residues 197–218; it reads FHMAGVAGVFGGSLFSAMHGSL. H198 contributes to the chlorophyll a binding site. A quinone is bound by residues H215 and 264-265; that span reads SF. H215 provides a ligand contact to Fe cation. H272 contributes to the Fe cation binding site. The chain crosses the membrane as a helical span at residues 274 to 288; that stretch reads FLAAWPVVRIWLTAL. Positions 332, 333, 342, and 344 each coordinate [CaMn4O5] cluster. A propeptide spanning residues 345 to 360 is cleaved from the precursor; that stretch reads AGEVLPVAVSAPAVHA.

This sequence belongs to the reaction center PufL/M/PsbA/D family. PSII is composed of 1 copy each of membrane proteins PsbA, PsbB, PsbC, PsbD, PsbE, PsbF, PsbH, PsbI, PsbJ, PsbK, PsbL, PsbM, PsbT, PsbX, PsbY, PsbZ, Psb30/Ycf12, at least 3 peripheral proteins of the oxygen-evolving complex and a large number of cofactors. It forms dimeric complexes. It depends on The D1/D2 heterodimer binds P680, chlorophylls that are the primary electron donor of PSII, and subsequent electron acceptors. It shares a non-heme iron and each subunit binds pheophytin, quinone, additional chlorophylls, carotenoids and lipids. D1 provides most of the ligands for the Mn4-Ca-O5 cluster of the oxygen-evolving complex (OEC). There is also a Cl(-1) ion associated with D1 and D2, which is required for oxygen evolution. The PSII complex binds additional chlorophylls, carotenoids and specific lipids. as a cofactor. Tyr-161 forms a radical intermediate that is referred to as redox-active TyrZ, YZ or Y-Z. In terms of processing, C-terminally processed by CTPA; processing is essential to allow assembly of the oxygen-evolving complex and thus photosynthetic growth.

Its subcellular location is the plastid. It localises to the chloroplast thylakoid membrane. The enzyme catalyses 2 a plastoquinone + 4 hnu + 2 H2O = 2 a plastoquinol + O2. Photosystem II (PSII) is a light-driven water:plastoquinone oxidoreductase that uses light energy to abstract electrons from H(2)O, generating O(2) and a proton gradient subsequently used for ATP formation. It consists of a core antenna complex that captures photons, and an electron transfer chain that converts photonic excitation into a charge separation. The D1/D2 (PsbA/PsbD) reaction center heterodimer binds P680, the primary electron donor of PSII as well as several subsequent electron acceptors. This Bumilleriopsis filiformis (Yellow-green alga) protein is Photosystem II protein D1.